A 300-amino-acid chain; its full sequence is 4-hydroxybenzoate octaprenyltransferase (300 aa).

The next 8 helical transmembrane spans lie at 32 to 52, 55 to 75, 108 to 128, 149 to 169, 178 to 198, 222 to 242, 246 to 266, and 278 to 298; these read IGTY…SEGA, LKNL…GCVI, LFGI…ALTI, YLPQ…AFAA, AWLL…MYAM, AAVA…GAQH, VYYQ…QHLI, and FLNN…EFLF.

This sequence belongs to the UbiA prenyltransferase family. Requires Mg(2+) as cofactor.

It is found in the cell inner membrane. It carries out the reaction all-trans-octaprenyl diphosphate + 4-hydroxybenzoate = 4-hydroxy-3-(all-trans-octaprenyl)benzoate + diphosphate. It participates in cofactor biosynthesis; ubiquinone biosynthesis. Functionally, catalyzes the prenylation of para-hydroxybenzoate (PHB) with an all-trans polyprenyl group. Mediates the second step in the final reaction sequence of ubiquinone-8 (UQ-8) biosynthesis, which is the condensation of the polyisoprenoid side chain with PHB, generating the first membrane-bound Q intermediate 3-octaprenyl-4-hydroxybenzoate. The sequence is that of 4-hydroxybenzoate octaprenyltransferase from Hahella chejuensis (strain KCTC 2396).